The sequence spans 442 residues: Protein translocase subunit SecF (442 aa).

Residues 1–39 are disordered; that stretch reads MASKAKTGRDDEATSAVELTEATESAVARTDGDSTTDTA. 6 consecutive transmembrane segments (helical) span residues 67 to 87, 187 to 207, 218 to 238, 243 to 263, 301 to 321, and 331 to 351; these read WFGVSGAIVAVAIASIVFRGF, ITKKAVIALVVFLVLVALYIT, AITAMLFDLTVTAGVYSLVGF, ATVIGLLTILGFSLYDTVIVF, LIGVLPVLALMVVAVWLLGVG, and LIGIIIGTYSSIFFATPLLVT. The tract at residues 366–442 is disordered; sequence VLKRRNSGSP…PTGKRNAGRR (77 aa). Residues 402-432 are compositionally biased toward low complexity; the sequence is QASSQSAPRAAQGSSKPAPGARPVRPVGTRR. A compositionally biased stretch (basic residues) spans 433–442; that stretch reads PTGKRNAGRR.

It belongs to the SecD/SecF family. SecF subfamily. Forms a complex with SecD. Part of the essential Sec protein translocation apparatus which comprises SecA, SecYEG and auxiliary proteins SecDF. Other proteins may also be involved.

The protein resides in the cell membrane. In terms of biological role, part of the Sec protein translocase complex. Interacts with the SecYEG preprotein conducting channel. SecDF uses the proton motive force (PMF) to complete protein translocation after the ATP-dependent function of SecA. The polypeptide is Protein translocase subunit SecF (Mycobacterium tuberculosis (strain ATCC 25618 / H37Rv)).